Here is a 278-residue protein sequence, read N- to C-terminus: C-type lectin domain family 1 member A (278 aa).

The segment at 1–42 (MLAKYSSTRDMLDADGDTTMSLHSQASATSQRPELGHTEHQR) is disordered. The Cytoplasmic portion of the chain corresponds to 1–52 (MLAKYSSTRDMLDADGDTTMSLHSQASATSQRPELGHTEHQRPSSAWRPVAL). Polar residues predominate over residues 18 to 32 (TTMSLHSQASATSQR). The chain crosses the membrane as a helical; Signal-anchor for type II membrane protein span at residues 53 to 73 (ILLTLCLVLLIGLAALGLVFF). At 74 to 278 (QFYQLSNTQQ…LHEPLSRRWR (205 aa)) the chain is on the extracellular side. 2 N-linked (GlcNAc...) asparagine glycosylation sites follow: Asn95 and Asn169. The region spanning 144–258 (HGDKCYQFYK…CRELRRCACE (115 aa)) is the C-type lectin domain. 2 disulfide bridges follow: Cys165/Cys257 and Cys236/Cys249.

Its subcellular location is the membrane. This chain is C-type lectin domain family 1 member A (CLEC1A), found in Bos taurus (Bovine).